Reading from the N-terminus, the 116-residue chain is T cell receptor alpha variable 38-1 (116 aa).

The first 21 residues, 1-21 (MTRVSLLWAVVVSTCLESGMA), serve as a signal peptide directing secretion. One can recognise an Ig-like domain in the interval 22–116 (QTVTQSQPEM…TAMYFCAFMK (95 aa)). Cysteines 43 and 112 form a disulfide. A glycan (N-linked (GlcNAc...) asparagine) is linked at N78.

In terms of assembly, alpha-beta TR is a heterodimer composed of an alpha and beta chain; disulfide-linked. The alpha-beta TR is associated with the transmembrane signaling CD3 coreceptor proteins to form the TR-CD3 (TcR or TCR). The assembly of alpha-beta TR heterodimers with CD3 occurs in the endoplasmic reticulum where a single alpha-beta TR heterodimer associates with one CD3D-CD3E heterodimer, one CD3G-CD3E heterodimer and one CD247 homodimer forming a stable octameric structure. CD3D-CD3E and CD3G-CD3E heterodimers preferentially associate with TR alpha and TR beta chains, respectively. The association of the CD247 homodimer is the last step of TcR assembly in the endoplasmic reticulum and is required for transport to the cell surface.

The protein localises to the cell membrane. In terms of biological role, v region of the variable domain of T cell receptor (TR) alpha chain that participates in the antigen recognition. Alpha-beta T cell receptors are antigen specific receptors which are essential to the immune response and are present on the cell surface of T lymphocytes. Recognize peptide-major histocompatibility (MH) (pMH) complexes that are displayed by antigen presenting cells (APC), a prerequisite for efficient T cell adaptive immunity against pathogens. Binding of alpha-beta TR to pMH complex initiates TR-CD3 clustering on the cell surface and intracellular activation of LCK that phosphorylates the ITAM motifs of CD3G, CD3D, CD3E and CD247 enabling the recruitment of ZAP70. In turn ZAP70 phosphorylates LAT, which recruits numerous signaling molecules to form the LAT signalosome. The LAT signalosome propagates signal branching to three major signaling pathways, the calcium, the mitogen-activated protein kinase (MAPK) kinase and the nuclear factor NF-kappa-B (NF-kB) pathways, leading to the mobilization of transcription factors that are critical for gene expression and essential for T cell growth and differentiation. The T cell repertoire is generated in the thymus, by V-(D)-J rearrangement. This repertoire is then shaped by intrathymic selection events to generate a peripheral T cell pool of self-MH restricted, non-autoaggressive T cells. Post-thymic interaction of alpha-beta TR with the pMH complexes shapes TR structural and functional avidity. The sequence is that of T cell receptor alpha variable 38-1 from Homo sapiens (Human).